Here is a 573-residue protein sequence, read N- to C-terminus: Estrogen receptor beta (573 aa).

Residues 15-170 (QEVDSSKVGE…CFAGKGDMHF (156 aa)) are modulating. 2 consecutive NR C4-type zinc fingers follow at residues 171-191 (CAVC…CEGC) and 207-231 (CPAT…LRKC). A DNA-binding region (nuclear receptor) is located at residues 171–236 (CAVCHDYASG…RLRKCYEVGM (66 aa)). Residues 291–527 (TPEQLINRII…DLLLEMLDAN (237 aa)) enclose the NR LBD domain. Composition is skewed to low complexity over residues 534 to 552 (MSAS…AQSQ) and 559 to 573 (CSGE…SSTI). Positions 534–573 (MSASYSSQPSPWSQAAQSQPGPPPSCSGECPCPPKESSTI) are disordered.

The protein belongs to the nuclear hormone receptor family. NR3 subfamily. Binds DNA as a homodimer. Can form a heterodimer with ER-alpha. As to expression, liver.

It is found in the nucleus. Functionally, binds estrogens with an affinity similar to that of ER-alpha, and activates expression of reporter genes containing estrogen response elements (ERE) in an estrogen-dependent manner. This is Estrogen receptor beta (esr2) from Anguilla japonica (Japanese eel).